Consider the following 1692-residue polypeptide: Regulating synaptic membrane exocytosis protein 1 (1692 aa).

The disordered stretch occupies residues 1–26 (MSSAVGPRGPRPPTVPPPMQELPDLS). Residues 9 to 20 (GPRPPTVPPPMQ) are compositionally biased toward pro residues. Residues 22-182 (LPDLSHLTEE…TKSGAWFFGS (161 aa)) enclose the RabBD domain. The segment at 110-170 (KDDAPTCGIC…VCNLCRKQQE (61 aa)) adopts an FYVE-type zinc-finger fold. The Zn(2+) site is built by C116, C119, C132, C135, C140, C143, C162, and C165. Polar residues predominate over residues 183–199 (GPQQTSQDGTLSDTATG). The disordered stretch occupies residues 183 to 555 (GPQQTSQDGT…CEDVELESES (373 aa)). The segment covering 204–217 (VPREKKARLQERSR) has biased composition (basic and acidic residues). Low complexity predominate over residues 223–234 (STAAASSQDAAP). The segment covering 305–357 (VEERERKERRESRRLEKGRSQDYPDTPEKRDEGKAADEEKQRKEEDYQTRYRS) has biased composition (basic and acidic residues). Residues 377 to 388 (MHARVSRARHER) show a composition bias toward basic residues. A compositionally biased stretch (low complexity) spans 412 to 430 (RAPAAARASPPDSPRAYSA). The span at 462 to 475 (PELKAQEPLRKQSR) shows a compositional bias: basic and acidic residues. The span at 497–509 (RNDSLSSDQSESV) shows a compositional bias: polar residues. Position 500 is a phosphoserine (S500). The segment covering 515-527 (KPHRSKRGGKKRQ) has biased composition (basic residues). A compositionally biased stretch (acidic residues) spans 545-555 (SCEDVELESES). S578 bears the Phosphoserine mark. One can recognise a PDZ domain in the interval 605–691 (RTTMPKDSGA…EPQVEIIVSR (87 aa)). Positions 698–732 (RIPESSHPPLESSSSSFESQKMERPSISVISPTSP) are disordered. Positions 700–716 (PESSHPPLESSSSSFES) are enriched in low complexity. Phosphoserine is present on residues S728 and S731. The C2 1 domain maps to 742 to 865 (LPGQLSVKLW…ALLDDEPHWY (124 aa)). Residues 870–1013 (HDESSLPLPQ…RTRDVDSQYL (144 aa)) form a disordered region. Residue S881 is modified to Phosphoserine. Residues 935–944 (STTLTVPEQQ) show a composition bias toward polar residues. Position 977 is a phosphoserine (S977). Residues 992–1009 (RHHDASRSPVDHRTRDVD) show a composition bias toward basic and acidic residues. The residue at position 1031 (S1031) is a Phosphoserine. Disordered stretches follow at residues 1118 to 1222 (NCLR…EHSS) and 1235 to 1278 (GGSA…PVRS). 2 stretches are compositionally biased toward basic and acidic residues: residues 1128-1144 (SPERERGRWSPSLDRRR) and 1157-1170 (PENDRHSRKSERSS). At S1252 the chain carries Phosphoserine. The span at 1252–1265 (SPTQSPPADTSFSS) shows a compositional bias: polar residues. Residue T1254 is modified to Phosphothreonine. S1256, S1308, S1310, S1311, S1339, S1340, and S1342 each carry phosphoserine. Disordered regions lie at residues 1332–1394 (CDNV…SGRS), 1408–1428 (LEHNDGSQSDTAVGTVGAGGK), and 1445–1495 (RSRS…GSIN). Residues 1345–1366 (SDVSAISRTSSASRLSSTSFMS) are compositionally biased toward low complexity. The residue at position 1416 (S1416) is a Phosphoserine. Over residues 1477-1490 (EMRKMVRQPSREST) the composition is skewed to basic and acidic residues. Residues 1538 to 1656 (AMGDIQIGME…DLSSMVIGWY (119 aa)) form the C2 2 domain. Phosphoserine is present on residues S1677, S1680, S1683, and S1692.

As to quaternary structure, binds RAB3A, RAB3B and RAB3D that have been activated by GTP-binding. Interacts with RAB3C, RAB10, RAB26 and RAB37. Binds UNC13A. Interacts with TSPOAP1 and RIMBP2. Interacts with PPFIA3 and PPFIA4. Interacts with ERC1. Binds SNAP25, SYT1 and CACNA1B. Interaction with SYT1 is enhanced by calcium ions. Interaction with SNAP25 is weaker in the presence of calcium ions. Post-translationally, phosphorylated by BRSK1. Expressed in melanocytes. Detected in brain and retina.

Its subcellular location is the cell membrane. The protein resides in the synapse. It localises to the presynaptic cell membrane. In terms of biological role, rab effector involved in exocytosis. May act as scaffold protein that regulates neurotransmitter release at the active zone. Essential for maintaining normal probability of neurotransmitter release and for regulating release during short-term synaptic plasticity. Plays a role in dendrite formation by melanocytes. The sequence is that of Regulating synaptic membrane exocytosis protein 1 (RIMS1) from Homo sapiens (Human).